We begin with the raw amino-acid sequence, 84 residues long: NAD(P)H-quinone oxidoreductase subunit O (84 aa).

This sequence belongs to the complex I NdhO subunit family. In terms of assembly, NDH-1 can be composed of about 15 different subunits; different subcomplexes with different compositions have been identified which probably have different functions.

Its subcellular location is the cellular thylakoid membrane. The enzyme catalyses a plastoquinone + NADH + (n+1) H(+)(in) = a plastoquinol + NAD(+) + n H(+)(out). The catalysed reaction is a plastoquinone + NADPH + (n+1) H(+)(in) = a plastoquinol + NADP(+) + n H(+)(out). Its function is as follows. NDH-1 shuttles electrons from an unknown electron donor, via FMN and iron-sulfur (Fe-S) centers, to quinones in the respiratory and/or the photosynthetic chain. The immediate electron acceptor for the enzyme in this species is believed to be plastoquinone. Couples the redox reaction to proton translocation, and thus conserves the redox energy in a proton gradient. Cyanobacterial NDH-1 also plays a role in inorganic carbon-concentration. This chain is NAD(P)H-quinone oxidoreductase subunit O, found in Synechococcus sp. (strain CC9605).